The primary structure comprises 296 residues: Protoheme IX farnesyltransferase (296 aa).

9 helical membrane-spanning segments follow: residues L29–A49, A54–M74, F98–V118, P121–M141, L147–A167, G175–I195, W221–V241, Y246–G266, and N275–A295.

This sequence belongs to the UbiA prenyltransferase family. Protoheme IX farnesyltransferase subfamily.

The protein resides in the cell inner membrane. It catalyses the reaction heme b + (2E,6E)-farnesyl diphosphate + H2O = Fe(II)-heme o + diphosphate. Its pathway is porphyrin-containing compound metabolism; heme O biosynthesis; heme O from protoheme: step 1/1. Functionally, converts heme B (protoheme IX) to heme O by substitution of the vinyl group on carbon 2 of heme B porphyrin ring with a hydroxyethyl farnesyl side group. The polypeptide is Protoheme IX farnesyltransferase (Anaeromyxobacter sp. (strain Fw109-5)).